Consider the following 643-residue polypeptide: Threonine--tRNA ligase (643 aa).

The TGS domain maps to 1-61; it reads MPIITLPDGS…EQDATLEIIT (61 aa). Residues 243–534 are catalytic; sequence DHRKIGKALD…ITEEYAGFFP (292 aa). Zn(2+)-binding residues include Cys334, His385, and His511.

Belongs to the class-II aminoacyl-tRNA synthetase family. Homodimer. It depends on Zn(2+) as a cofactor.

The protein localises to the cytoplasm. It carries out the reaction tRNA(Thr) + L-threonine + ATP = L-threonyl-tRNA(Thr) + AMP + diphosphate + H(+). Functionally, catalyzes the attachment of threonine to tRNA(Thr) in a two-step reaction: L-threonine is first activated by ATP to form Thr-AMP and then transferred to the acceptor end of tRNA(Thr). Also edits incorrectly charged L-seryl-tRNA(Thr). The chain is Threonine--tRNA ligase from Haemophilus influenzae (strain PittEE).